A 197-amino-acid polypeptide reads, in one-letter code: Protein Hikeshi (197 aa).

Residues 18-55 (VAEDKFVFDLPDYENINHVVVFMLGTIPFPEGMGGSVY) are required for F-X-F-G repeats-nucleoporins recognition and nuclear import. The flexible linker region involved in nuclear import of HSP70 proteins stretch occupies residues 124-134 (QTPVGSAAVSS).

It belongs to the OPI10 family. As to quaternary structure, forms an asymmetric homodimer; required for binding and nuclear import of HSP70 proteins. Interacts with ATP-bound HSP70 proteins. Interacts with NUP62 and NUP153 (via F-X-F-G repeats). Interacts with HSPA8. As to expression, expressed in the central white matter of newborn and adult brain, particularly in regions where oligodendrocytes are generated.

Its subcellular location is the cytoplasm. The protein resides in the cytosol. It localises to the nucleus. Functionally, acts as a specific nuclear import carrier for HSP70 proteins following heat-shock stress: acts by mediating the nucleoporin-dependent translocation of ATP-bound HSP70 proteins into the nucleus. HSP70 proteins import is required to protect cells from heat shock damages. Does not translocate ADP-bound HSP70 proteins into the nucleus. May also be indirectly required for organization and/or function of the secretory apparatus in Club cells in lung. This Mus musculus (Mouse) protein is Protein Hikeshi.